The following is a 343-amino-acid chain: Ferrochelatase (343 aa).

Positions 211 and 292 each coordinate Fe cation.

Belongs to the ferrochelatase family.

The protein resides in the cytoplasm. The enzyme catalyses heme b + 2 H(+) = protoporphyrin IX + Fe(2+). It functions in the pathway porphyrin-containing compound metabolism; protoheme biosynthesis; protoheme from protoporphyrin-IX: step 1/1. Catalyzes the ferrous insertion into protoporphyrin IX. The protein is Ferrochelatase of Gluconobacter oxydans (strain 621H) (Gluconobacter suboxydans).